Here is a 31-residue protein sequence, read N- to C-terminus: Protamine PTP4 (31 aa).

The disordered stretch occupies residues 1–31 (MPRRRRASRRIRRRRRPRVSRRRRGGRRRRR).

In terms of tissue distribution, testis.

It localises to the nucleus. Its subcellular location is the chromosome. Protamines substitute for histones in the chromatin of sperm during the haploid phase of spermatogenesis. They compact sperm DNA into a highly condensed, stable and inactive complex. The chain is Protamine PTP4 from Oncorhynchus mykiss (Rainbow trout).